Reading from the N-terminus, the 707-residue chain is Ornithine decarboxylase (707 aa).

Positions Asn83–Thr102 are disordered. Lys288 is subject to N6-(pyridoxal phosphate)lysine. Pyridoxal 5'-phosphate is bound by residues Ser421, Gly458, and Glu498–Arg501. Residue Phe561–Asp562 participates in substrate binding. Cys634 serves as the catalytic Proton donor; shared with dimeric partner. Asp635 serves as a coordination point for substrate. Tyr663 contributes to the pyridoxal 5'-phosphate binding site.

Belongs to the Orn/Lys/Arg decarboxylase class-II family. In terms of assembly, homodimer. Only the dimer is catalytically active, as the active sites are constructed of residues from both monomers. It depends on pyridoxal 5'-phosphate as a cofactor.

The enzyme catalyses L-ornithine + H(+) = putrescine + CO2. The protein operates within amine and polyamine biosynthesis; putrescine biosynthesis via L-ornithine pathway; putrescine from L-ornithine: step 1/1. Inhibited by antizyme (AZ) in response to polyamine levels. AZ inhibits the assembly of the functional homodimer by binding to ODC monomers and targeting them for ubiquitin-independent proteolytic destruction by the 26S proteasome. Inhibited by 1-amino-oxy-3-aminopropane (APA, an isosteric analog of putrescine). Irreversibly inhibited by alpha-difluoromethylornithine (DFMO, a curative agent of West African sleeping sickness). Functionally, catalyzes the first and rate-limiting step of polyamine biosynthesis that converts ornithine into putrescine, which is the precursor for the polyamines, spermidine and spermine. Polyamines are essential for cell proliferation and are implicated in cellular processes, ranging from DNA replication to apoptosis. This chain is Ornithine decarboxylase, found in Leishmania donovani.